Consider the following 1454-residue polypeptide: Probable cleavage and polyadenylation specificity factor subunit 1 (1454 aa).

The disordered stretch occupies residues 810–843 (EEKEKKAKQTAAQEKEKETEKKKDDAKNEEDQVN). Residues 812-843 (KEKKAKQTAAQEKEKETEKKKDDAKNEEDQVN) show a composition bias toward basic and acidic residues.

This sequence belongs to the CPSF1 family. CPSF is a heterotetramer composed of four distinct subunits 160 (cpsf-1), 100 (cpsf-2), 70 (cpsf-3), and 30 kDa (cpsf-4).

It localises to the nucleus. In terms of biological role, CPSF plays a key role in pre-mRNA 3'-end formation, recognizing the AAUAAA signal sequence and interacting with poly(A)polymerase and other factors to bring about cleavage and poly(A) addition. This subunit is involved in the RNA recognition step of the polyadenylation reaction. The protein is Probable cleavage and polyadenylation specificity factor subunit 1 of Caenorhabditis briggsae.